Reading from the N-terminus, the 261-residue chain is MTHQTHAYHMVDPSPWPLTGALSALLMTSGLTMWFHYHSVVLLFLGLMTNTLTMFQWWRDVVREGTFQGHHTPVVQEGLRYGMILFITSEVLFFTGFFWAFYHSSLAPTPELGSYWPPVGVYPLNPLEVPLLNTSVLLASGVTITWAHHSLMEGNRKNMLQALLITILLGVYFTLLQMFEYYEASFTISDGIYGSTFFVTTGFHGLHVIIGSTFLLTCFIRQLKFHFTSNHHFGFEAAAWYWHFVDVVWLFLYLSIYWWGS.

At 1–15 (MTHQTHAYHMVDPSP) the chain is on the mitochondrial matrix side. Residues 16 to 34 (WPLTGALSALLMTSGLTMW) form a helical membrane-spanning segment. Over 35–40 (FHYHSV) the chain is Mitochondrial intermembrane. Residues 41–66 (VLLFLGLMTNTLTMFQWWRDVVREGT) traverse the membrane as a helical segment. Residues 67-72 (FQGHHT) lie on the Mitochondrial matrix side of the membrane. Residues 73-105 (PVVQEGLRYGMILFITSEVLFFTGFFWAFYHSS) traverse the membrane as a helical segment. Residues 106–128 (LAPTPELGSYWPPVGVYPLNPLE) lie on the Mitochondrial intermembrane side of the membrane. Residues 129-152 (VPLLNTSVLLASGVTITWAHHSLM) form a helical membrane-spanning segment. The Mitochondrial matrix segment spans residues 153–155 (EGN). A helical transmembrane segment spans residues 156–183 (RKNMLQALLITILLGVYFTLLQMFEYYE). Over 184 to 190 (ASFTISD) the chain is Mitochondrial intermembrane. A helical transmembrane segment spans residues 191 to 223 (GIYGSTFFVTTGFHGLHVIIGSTFLLTCFIRQL). At 224-232 (KFHFTSNHH) the chain is on the mitochondrial matrix side. A helical transmembrane segment spans residues 233–256 (FGFEAAAWYWHFVDVVWLFLYLSI). Residues 257 to 261 (YWWGS) are Mitochondrial intermembrane-facing.

It belongs to the cytochrome c oxidase subunit 3 family. As to quaternary structure, component of the cytochrome c oxidase (complex IV, CIV), a multisubunit enzyme composed of 14 subunits. The complex is composed of a catalytic core of 3 subunits MT-CO1, MT-CO2 and MT-CO3, encoded in the mitochondrial DNA, and 11 supernumerary subunits COX4I, COX5A, COX5B, COX6A, COX6B, COX6C, COX7A, COX7B, COX7C, COX8 and NDUFA4, which are encoded in the nuclear genome. The complex exists as a monomer or a dimer and forms supercomplexes (SCs) in the inner mitochondrial membrane with NADH-ubiquinone oxidoreductase (complex I, CI) and ubiquinol-cytochrome c oxidoreductase (cytochrome b-c1 complex, complex III, CIII), resulting in different assemblies (supercomplex SCI(1)III(2)IV(1) and megacomplex MCI(2)III(2)IV(2)).

The protein resides in the mitochondrion inner membrane. It catalyses the reaction 4 Fe(II)-[cytochrome c] + O2 + 8 H(+)(in) = 4 Fe(III)-[cytochrome c] + 2 H2O + 4 H(+)(out). Its function is as follows. Component of the cytochrome c oxidase, the last enzyme in the mitochondrial electron transport chain which drives oxidative phosphorylation. The respiratory chain contains 3 multisubunit complexes succinate dehydrogenase (complex II, CII), ubiquinol-cytochrome c oxidoreductase (cytochrome b-c1 complex, complex III, CIII) and cytochrome c oxidase (complex IV, CIV), that cooperate to transfer electrons derived from NADH and succinate to molecular oxygen, creating an electrochemical gradient over the inner membrane that drives transmembrane transport and the ATP synthase. Cytochrome c oxidase is the component of the respiratory chain that catalyzes the reduction of oxygen to water. Electrons originating from reduced cytochrome c in the intermembrane space (IMS) are transferred via the dinuclear copper A center (CU(A)) of subunit 2 and heme A of subunit 1 to the active site in subunit 1, a binuclear center (BNC) formed by heme A3 and copper B (CU(B)). The BNC reduces molecular oxygen to 2 water molecules using 4 electrons from cytochrome c in the IMS and 4 protons from the mitochondrial matrix. The chain is Cytochrome c oxidase subunit 3 (MT-CO3) from Mammuthus primigenius (Siberian woolly mammoth).